We begin with the raw amino-acid sequence, 180 residues long: Membrane protein UL121 (180 aa).

The first 27 residues, 1–27, serve as a signal peptide directing secretion; sequence MWGCGWSRILVLLLLMCMALMARGTYG. The helical transmembrane segment at 143-163 threads the bilayer; the sequence is LGLLYAVCLILSFSIVTAALW.

Belongs to the HHV-5 UL121 protein family.

The protein resides in the host membrane. The polypeptide is Membrane protein UL121 (UL121) (Human cytomegalovirus (strain Merlin) (HHV-5)).